A 227-amino-acid polypeptide reads, in one-letter code: Uracil-DNA glycosylase (227 aa).

Asp68 serves as the catalytic Proton acceptor.

The protein belongs to the uracil-DNA glycosylase (UDG) superfamily. UNG family.

Its subcellular location is the cytoplasm. It carries out the reaction Hydrolyzes single-stranded DNA or mismatched double-stranded DNA and polynucleotides, releasing free uracil.. Excises uracil residues from the DNA which can arise as a result of misincorporation of dUMP residues by DNA polymerase or due to deamination of cytosine. The protein is Uracil-DNA glycosylase of Mycobacterium sp. (strain JLS).